Here is a 336-residue protein sequence, read N- to C-terminus: F420-dependent glucose-6-phosphate dehydrogenase (336 aa).

Position 39 (aspartate 39) interacts with coenzyme F420-(gamma-Glu)n. Histidine 40 (proton donor) is an active-site residue. Residues threonine 76 and 107-108 each bind coenzyme F420-(gamma-Glu)n; that span reads TG. Catalysis depends on glutamate 109, which acts as the Proton acceptor. Residues asparagine 112, 177-178, and 180-181 contribute to the coenzyme F420-(gamma-Glu)n site; these read GG and AV. Threonine 195, lysine 198, lysine 259, and arginine 283 together coordinate substrate.

This sequence belongs to the F420-dependent glucose-6-phosphate dehydrogenase family. Homodimer.

It carries out the reaction oxidized coenzyme F420-(gamma-L-Glu)(n) + D-glucose 6-phosphate + H(+) = 6-phospho-D-glucono-1,5-lactone + reduced coenzyme F420-(gamma-L-Glu)(n). Functionally, catalyzes the coenzyme F420-dependent oxidation of glucose 6-phosphate (G6P) to 6-phosphogluconolactone. Appears to have a role in resistance to oxidative stress, via its consumption of G6P that serves as a source of reducing power to combat oxidative stress in mycobacteria. More precisely, is likely involved in a F420-dependent anti-oxidant mechanism that protects M.tuberculosis against oxidative stress and bactericidal agents. In terms of biological role, is essential for the bioreductive activation of the bicyclic 4-nitroimidazole prodrug PA-824 (nitroimidazo-oxazine) developed for anti-tuberculosis therapy against both replicating and persistent bacteria. It does not interact directly with PA-824 but, rather, provides reduced F420 to the deazaflavin-dependent nitroreductase Ddn, which in turn activates PA-824. The protein is F420-dependent glucose-6-phosphate dehydrogenase (fgd1) of Mycobacterium tuberculosis (strain CDC 1551 / Oshkosh).